A 40-amino-acid polypeptide reads, in one-letter code: Photosystem II reaction center protein X (40 aa).

At 1–11 (TITPSLKGFFI) the chain is on the lumenal side. The helical transmembrane segment at 12 to 28 (GLLSGAVVLGLTFAVLI) threads the bilayer. At 29–40 (AISQIDKVQRSL) the chain is on the cytoplasmic side.

This sequence belongs to the PsbX family. Type 1 subfamily. In terms of assembly, PSII is composed of 1 copy each of membrane proteins PsbA, PsbB, PsbC, PsbD, PsbE, PsbF, PsbH, PsbI, PsbJ, PsbK, PsbL, PsbM, PsbT, PsbX, PsbY, PsbZ, Psb30/Ycf12, peripheral proteins PsbO, CyanoQ (PsbQ), PsbU, PsbV and a large number of cofactors. It forms dimeric complexes. It depends on PSII binds multiple chlorophylls, carotenoids and specific lipids. as a cofactor.

The protein localises to the cellular thylakoid membrane. Its function is as follows. Involved in the binding and/or turnover of quinones at the Q(B) site of photosystem II (PSII). PSII is a light-driven water plastoquinone oxidoreductase, using light energy to abstract electrons from H(2)O, generating a proton gradient subsequently used for ATP formation. The sequence is that of Photosystem II reaction center protein X from Thermostichus vulcanus (Synechococcus vulcanus).